A 707-amino-acid polypeptide reads, in one-letter code: Zinc finger CCHC domain-containing protein 8 (707 aa).

A2 is modified (N-acetylalanine). Positions 16–44 (FDHPEESIPKPVHTRFKDDDGDEEDENGV) are disordered. Residues 34 to 43 (DDGDEEDENG) are compositionally biased toward acidic residues. Residues 45-80 (GDAELRERLRQCEETIEQLRAENQELKRKLNILTRP) adopt a coiled-coil conformation. The CCHC-type zinc-finger motif lies at 227–244 (PHCFNCGSEEHQMKDCPM). 2 RBM7 binding regions span residues 286–299 (FKPG…QDAL) and 309–324 (FIYR…GWLK). At T342 the chain carries Phosphothreonine. Disordered regions lie at residues 409–518 (APGV…LTLE), 531–607 (LEQA…TSLC), and 641–660 (QKLF…HSPI). Residue K413 forms a Glycyl lysine isopeptide (Lys-Gly) (interchain with G-Cter in SUMO2) linkage. Positions 456–465 (SQSSESFQFQ) are enriched in low complexity. A compositionally biased stretch (pro residues) spans 466 to 496 (PPLPPDTPPLPRGTPPPVFTPPLPKGTPPLT). Phosphothreonine is present on residues T472, T479, and T485. Phosphothreonine; by GSK3 is present on T492. Residues 516–539 (TLEELEEQQRRIWAALEQAESVNS) adopt a coiled-coil conformation. Residues 549 to 559 (LTGNSVASSPC) are compositionally biased toward polar residues. Position 577 is a phosphothreonine (T577). Residue S598 is modified to Phosphoserine. Positions 598–607 (SPDSEVTSLC) are enriched in polar residues. The residue at position 648 (T648) is a Phosphothreonine. 3 positions are modified to phosphoserine: S649, S658, and S695. Residues 659–707 (PIPDMSKFATGITPFEFENMAESTGMYLRIRSLLKNSPRNQQKNKKASE) form an MTREX binding region.

It belongs to the ZCCHC8 family. In terms of assembly, component of a nuclear TRAMP-like complex, an ATP-dependent exosome regulatory complex consisting of a helicase (MTREX), an oligadenylate polymerase (TENT4B or TENT4A), and a substrate specific RNA-binding factor (ZCCHC7 or ZCCHC8). Several TRAMP-like complexes exist with specific compositions and are associated with nuclear, or nucleolar RNA exosomes. Identified in the spliceosome C complex. Component of the nuclear exosome targeting (NEXT) complex composed of MTREX, ZCCHC8, and RBM7 that directs a subset of non-coding short-lived RNAs for exosomal degradation. Interacts with proteins involved in RNA processing and degradation such as MTREX and RBM7; interaction with MTREX enhances MTREX RNA helicase activity and bridges between RBM7 and MTREX. Interacts with TERC, the telomerase RNA component. In terms of processing, phosphorylation at Thr-492 by GSK3 is triggered in cells entering mitosis; this phosphorylation is greatly enhanced by nocodazole treatment, but reduced by lithium.

It localises to the nucleus. The protein localises to the nucleoplasm. In terms of biological role, scaffolding subunit of the trimeric nuclear exosome targeting (NEXT) complex that is involved in the surveillance and turnover of aberrant transcripts and non-coding RNAs. NEXT functions as an RNA exosome cofactor that directs a subset of non-coding short-lived RNAs for exosomal degradation. May be involved in pre-mRNA splicing. It is required for 3'-end maturation of telomerase RNA component (TERC), TERC 3'-end targeting to the nuclear RNA exosome, and for telomerase function. The sequence is that of Zinc finger CCHC domain-containing protein 8 (ZCCHC8) from Homo sapiens (Human).